We begin with the raw amino-acid sequence, 210 residues long: Cytochrome c4 (210 aa).

An N-terminal signal peptide occupies residues Met-1–Ala-20. Heme c contacts are provided by Cys-34, Cys-37, His-38, Met-86, Cys-139, Cys-142, His-143, and Met-187.

In terms of processing, binds 2 heme c groups covalently per subunit.

Its subcellular location is the periplasm. Functionally, diheme, high potential cytochrome c believed to be an intermediate electron donor to terminal oxidation systems. The sequence is that of Cytochrome c4 (cc4) from Stutzerimonas stutzeri (Pseudomonas stutzeri).